A 312-amino-acid chain; its full sequence is Very-long-chain 3-oxoacyl-CoA reductase-like protein At1g24470 (312 aa).

The helical transmembrane segment at 14–34 (LHFVCFIGFLFLLRVLFIPLL) threads the bilayer. 52–81 (GSWAMVTGATEGIGRAFAHELAKHGLNLIL) contacts NADP(+). Ser-190 provides a ligand contact to substrate. Tyr-205 functions as the Proton acceptor in the catalytic mechanism.

The protein belongs to the short-chain dehydrogenases/reductases (SDR) family. Expressed in green siliques, flowers, inflorescence stems and leaves. Not detected in roots.

It localises to the endoplasmic reticulum membrane. In terms of biological role, probable reductase, but unlike KCR1, has no beta-ketoacyl-coenzyme A reductase activity. The polypeptide is Very-long-chain 3-oxoacyl-CoA reductase-like protein At1g24470 (KCR2) (Arabidopsis thaliana (Mouse-ear cress)).